A 307-amino-acid polypeptide reads, in one-letter code: Olfactory receptor 5M3 (307 aa).

Residues 1–23 (MLNFTDVTEFILLGLTSRREWQV) are Extracellular-facing. N3 is a glycosylation site (N-linked (GlcNAc...) asparagine). The chain crosses the membrane as a helical span at residues 24 to 44 (LFFIIFLVVYIITMVGNIGMM). Over 45–52 (VLIKVSPQ) the chain is Cytoplasmic. The helical transmembrane segment at 53 to 73 (LNNPMYFFLSHLSFVDVWFSS) threads the bilayer. Topologically, residues 74–97 (NVTPKMLENLLSDKKTITYAGCLV) are extracellular. C95 and C187 are disulfide-bonded. Residues 98 to 118 (QCFFFIALVHVEIFILAAMAF) form a helical membrane-spanning segment. Residues 119 to 137 (DRYMAIGNPLLYGSKMSRV) are Cytoplasmic-facing. The helical transmembrane segment at 138-158 (VCIRLITFPYIYGFLTSLAAT) threads the bilayer. Residues 159–194 (LWTYGLYFCGKIEINHFYCADPPLIKMACAGTFVKE) are Extracellular-facing. A helical membrane pass occupies residues 195–215 (YTMIILAGINFTYSLTVIIIS). Residues 216–235 (YLFILIAILRMRSAEGRQKA) are Cytoplasmic-facing. Residues 236–256 (FSTCGSHLTAVIIFYGTLIFM) traverse the membrane as a helical segment. Residues 257-269 (YLRRPTEESVEQG) lie on the Extracellular side of the membrane. A helical transmembrane segment spans residues 270-290 (KMVAVFYTTVIPMLNPMIYSL). Residues 291-307 (RNKDVKKAMMKVISRSC) are Cytoplasmic-facing.

It belongs to the G-protein coupled receptor 1 family.

It localises to the cell membrane. Functionally, odorant receptor. The chain is Olfactory receptor 5M3 (OR5M3) from Homo sapiens (Human).